The following is a 378-amino-acid chain: Chaperone protein DnaJ (378 aa).

The J domain maps to 5 to 69 (DYYEVLGVSK…NKRANYDQFG (65 aa)). Residues 135–217 (GSEKEISIRK…CHGKGTENKN (83 aa)) form a CR-type zinc finger. Zn(2+) contacts are provided by cysteine 148, cysteine 151, cysteine 165, cysteine 168, cysteine 191, cysteine 194, cysteine 205, and cysteine 208. CXXCXGXG motif repeat units follow at residues 148-155 (CHTCDGEG), 165-172 (CHYCNGSG), 191-198 (CPVCSGSG), and 205-212 (CPTCHGKG).

This sequence belongs to the DnaJ family. As to quaternary structure, homodimer. Zn(2+) is required as a cofactor.

Its subcellular location is the cytoplasm. In terms of biological role, participates actively in the response to hyperosmotic and heat shock by preventing the aggregation of stress-denatured proteins and by disaggregating proteins, also in an autonomous, DnaK-independent fashion. Unfolded proteins bind initially to DnaJ; upon interaction with the DnaJ-bound protein, DnaK hydrolyzes its bound ATP, resulting in the formation of a stable complex. GrpE releases ADP from DnaK; ATP binding to DnaK triggers the release of the substrate protein, thus completing the reaction cycle. Several rounds of ATP-dependent interactions between DnaJ, DnaK and GrpE are required for fully efficient folding. Also involved, together with DnaK and GrpE, in the DNA replication of plasmids through activation of initiation proteins. The polypeptide is Chaperone protein DnaJ (Staphylococcus saprophyticus subsp. saprophyticus (strain ATCC 15305 / DSM 20229 / NCIMB 8711 / NCTC 7292 / S-41)).